Reading from the N-terminus, the 110-residue chain is Small ribosomal subunit protein uS17 (110 aa).

It belongs to the universal ribosomal protein uS17 family. As to quaternary structure, part of the 30S ribosomal subunit.

Functionally, one of the primary rRNA binding proteins, it binds specifically to the 5'-end of 16S ribosomal RNA. In Haloquadratum walsbyi (strain DSM 16790 / HBSQ001), this protein is Small ribosomal subunit protein uS17.